A 481-amino-acid chain; its full sequence is Glutamate--tRNA ligase (481 aa).

Positions 11-21 (PSPTGLLHIGN) match the 'HIGH' region motif. The short motif at 255-259 (KLSKR) is the 'KMSKS' region element. K258 lines the ATP pocket.

It belongs to the class-I aminoacyl-tRNA synthetase family. Glutamate--tRNA ligase type 1 subfamily. As to quaternary structure, monomer.

It localises to the cytoplasm. The enzyme catalyses tRNA(Glu) + L-glutamate + ATP = L-glutamyl-tRNA(Glu) + AMP + diphosphate. In terms of biological role, catalyzes the attachment of glutamate to tRNA(Glu) in a two-step reaction: glutamate is first activated by ATP to form Glu-AMP and then transferred to the acceptor end of tRNA(Glu). The chain is Glutamate--tRNA ligase from Streptococcus pyogenes serotype M4 (strain MGAS10750).